Consider the following 906-residue polypeptide: Protein translocase subunit SecA (906 aa).

ATP is bound by residues Gln-87, 105–109 (GEGKT), and Asp-521. A compositionally biased stretch (low complexity) spans 849 to 865 (STATAAEPAPEASQSQS). Residues 849 to 897 (STATAAEPAPEASQSQSTNDATASQNPPITEVEASKVGRNQPCPCGSGK) are disordered. Residues 866 to 876 (TNDATASQNPP) show a composition bias toward polar residues. Residues Cys-891, Cys-893, Cys-902, and Cys-903 each coordinate Zn(2+).

This sequence belongs to the SecA family. Monomer and homodimer. Part of the essential Sec protein translocation apparatus which comprises SecA, SecYEG and auxiliary proteins SecDF-YajC and YidC. Requires Zn(2+) as cofactor.

It localises to the cell inner membrane. The protein localises to the cytoplasm. It catalyses the reaction ATP + H2O + cellular proteinSide 1 = ADP + phosphate + cellular proteinSide 2.. Part of the Sec protein translocase complex. Interacts with the SecYEG preprotein conducting channel. Has a central role in coupling the hydrolysis of ATP to the transfer of proteins into and across the cell membrane, serving both as a receptor for the preprotein-SecB complex and as an ATP-driven molecular motor driving the stepwise translocation of polypeptide chains across the membrane. This Dichelobacter nodosus (strain VCS1703A) protein is Protein translocase subunit SecA.